The following is a 102-amino-acid chain: Small ribosomal subunit protein uS10 (102 aa).

It belongs to the universal ribosomal protein uS10 family. As to quaternary structure, part of the 30S ribosomal subunit.

Functionally, involved in the binding of tRNA to the ribosomes. The polypeptide is Small ribosomal subunit protein uS10 (Roseiflexus sp. (strain RS-1)).